The chain runs to 181 residues: ADP-ribosylation factor 1-like 2 (181 aa).

A lipid anchor (N-myristoyl glycine) is attached at G2. An important for the stable binding to the membranes region spans residues 3–16; it reads NVFGSLFKGLFGKR. Residues 24 to 32, 126 to 129, and A160 contribute to the GTP site; these read GLDAAGKTT and NKQD.

It belongs to the small GTPase superfamily. Arf family. As to expression, expressed in hypodermis, intestine, spermatheca, uterus, gonadal sheath, vulva cells, pharynx muscle, body wall muscle, head neurons, ventral nerve cord.

It localises to the golgi apparatus membrane. It carries out the reaction GTP + H2O = GDP + phosphate + H(+). Its activity is regulated as follows. Alternates between an inactive GDP-bound form and an active GTP-bound form. Activated by a guanine nucleotide-exchange factor (GEF) and inactivated by GTPase-activating protein (GAP). Its function is as follows. Small GTPase involved in protein trafficking between different compartments. Modulates vesicle budding and uncoating within the Golgi complex. In its GTP-bound form, triggers the recruitment of coatomer proteins to the Golgi membrane. The hydrolysis of ARF1-bound GTP, which is mediated by ARFGAPs proteins, is required for dissociation of coat proteins from Golgi membranes and vesicles. Involved in endoplasmic reticulum dynamics during embryogenesis. Also required for adult germline function. Plays a role in cell shedding during embryogenesis probably by promoting the endocytosis of cell adhesion molecules. During neurogenesis, involved in cell autonomous Q.p neuroblast asymmetric divisions that generate one precursor cell and one apoptotic cell, probably by controlling endocytosis. Plays a role in maintaining mitochondrial morphology. This chain is ADP-ribosylation factor 1-like 2, found in Caenorhabditis elegans.